We begin with the raw amino-acid sequence, 371 residues long: Cytochrome b (371 aa).

A run of 4 helical transmembrane segments spans residues F25–V45, W69–I90, W105–L125, and F170–M190. Residues H75 and H89 each contribute to the heme b site. Positions 174 and 188 each coordinate heme b. H193 provides a ligand contact to a ubiquinone. A run of 4 helical transmembrane segments spans residues Y218–L238, L280–H300, I312–T332, and F339–P358.

Belongs to the cytochrome b family. In terms of assembly, the cytochrome bc1 complex contains 3 respiratory subunits (MT-CYB, CYC1 and UQCRFS1), 2 core proteins (UQCRC1 and UQCRC2) and probably 6 low-molecular weight proteins. The cofactor is heme b.

It localises to the mitochondrion inner membrane. Component of the ubiquinol-cytochrome c reductase complex (complex III or cytochrome b-c1 complex) that is part of the mitochondrial respiratory chain. The b-c1 complex mediates electron transfer from ubiquinol to cytochrome c. Contributes to the generation of a proton gradient across the mitochondrial membrane that is then used for ATP synthesis. The chain is Cytochrome b (MT-CYB) from Eryx elegans (Central Asian sand boa).